We begin with the raw amino-acid sequence, 157 residues long: SsrA-binding protein (157 aa).

Positions V132–K157 are disordered. Basic and acidic residues predominate over residues K135–K157.

The protein belongs to the SmpB family.

It localises to the cytoplasm. In terms of biological role, required for rescue of stalled ribosomes mediated by trans-translation. Binds to transfer-messenger RNA (tmRNA), required for stable association of tmRNA with ribosomes. tmRNA and SmpB together mimic tRNA shape, replacing the anticodon stem-loop with SmpB. tmRNA is encoded by the ssrA gene; the 2 termini fold to resemble tRNA(Ala) and it encodes a 'tag peptide', a short internal open reading frame. During trans-translation Ala-aminoacylated tmRNA acts like a tRNA, entering the A-site of stalled ribosomes, displacing the stalled mRNA. The ribosome then switches to translate the ORF on the tmRNA; the nascent peptide is terminated with the 'tag peptide' encoded by the tmRNA and targeted for degradation. The ribosome is freed to recommence translation, which seems to be the essential function of trans-translation. In Francisella tularensis subsp. novicida (strain U112), this protein is SsrA-binding protein.